Reading from the N-terminus, the 335-residue chain is Histidinol-phosphate aminotransferase (335 aa).

Lys-202 bears the N6-(pyridoxal phosphate)lysine mark.

The protein belongs to the class-II pyridoxal-phosphate-dependent aminotransferase family. Histidinol-phosphate aminotransferase subfamily. In terms of assembly, homodimer. Pyridoxal 5'-phosphate is required as a cofactor.

The catalysed reaction is L-histidinol phosphate + 2-oxoglutarate = 3-(imidazol-4-yl)-2-oxopropyl phosphate + L-glutamate. The protein operates within amino-acid biosynthesis; L-histidine biosynthesis; L-histidine from 5-phospho-alpha-D-ribose 1-diphosphate: step 7/9. The sequence is that of Histidinol-phosphate aminotransferase from Thermotoga maritima (strain ATCC 43589 / DSM 3109 / JCM 10099 / NBRC 100826 / MSB8).